The sequence spans 317 residues: R2-like ligand binding oxidase (317 aa).

The Mn(2+) site is built by E73, E106, and H109. The 3-(O4'-tyrosyl)-valine (Val-Tyr) cross-link spans 76–167; sequence VTQDLQPFMA…ANQVRASVTY (92 aa). E106 lines the Fe cation pocket. Positions 172, 207, and 210 each coordinate Fe cation.

This sequence belongs to the ribonucleoside diphosphate reductase small chain family. R2-like ligand binding oxidase subfamily. In terms of assembly, homodimer. Fe cation is required as a cofactor. Requires Mn(2+) as cofactor.

Its function is as follows. Probable oxidase. The sequence is that of R2-like ligand binding oxidase from Saccharopolyspora erythraea (strain ATCC 11635 / DSM 40517 / JCM 4748 / NBRC 13426 / NCIMB 8594 / NRRL 2338).